A 185-amino-acid chain; its full sequence is uncharacterized protein (185 aa).

Residues 1 to 69 are Cytoplasmic-facing; that stretch reads MSSFIDSIKS…SSDCSRAERT (69 aa). A helical membrane pass occupies residues 70-90; the sequence is FNLILFAIVDLVICCESMAFF. A topological domain (extracellular) is located at residue N91. A helical transmembrane segment spans residues 92-112; it reads LLLKLPSMLLVSFLTMLVFSI. Topologically, residues 113–118 are cytoplasmic; that stretch reads SYSWSA. The chain crosses the membrane as a helical span at residues 119 to 139; it reads FNWISFAFSSASFLMKACILF. Over 140–185 the chain is Extracellular; the sequence is NSSFTWFGVKAVIAEDMLYRMVRGLFCASFVKQLQTTFLATAIVLC.

It is found in the membrane. This is an uncharacterized protein from Saccharomyces cerevisiae (strain ATCC 204508 / S288c) (Baker's yeast).